Here is a 516-residue protein sequence, read N- to C-terminus: Exodeoxyribonuclease 7 large subunit (516 aa).

This sequence belongs to the XseA family. Heterooligomer composed of large and small subunits.

The protein localises to the cytoplasm. It catalyses the reaction Exonucleolytic cleavage in either 5'- to 3'- or 3'- to 5'-direction to yield nucleoside 5'-phosphates.. Functionally, bidirectionally degrades single-stranded DNA into large acid-insoluble oligonucleotides, which are then degraded further into small acid-soluble oligonucleotides. The sequence is that of Exodeoxyribonuclease 7 large subunit from Chlamydia trachomatis serovar L2 (strain ATCC VR-902B / DSM 19102 / 434/Bu).